Here is a 316-residue protein sequence, read N- to C-terminus: MSEVERALDVLLQEAEELCIGSSVVELDRIPTALEFCREFYSKNQPVVIRKALNWPAIGKWTPKYLIEALGDRSVDVAITPNGYADGLATQNGQEYFVLPLETKMKLSEVVRRLDDPTGAVHYIQKQNSNLSVDLPELAADLRVSDLDFAQQSFNKPPDAVNFWLGDERAVTSMHKDPYENVYCVISGHKDFVLIPPHQLSCVPRGIYPTGVYKTSDSGQFYIEPLRDEEGSDQFTEWVSVDPLSPDLAKYPEYARAKPLKVRVHAGDILYLPNYWFHHVSQSHKCIAVNFWYDLDYDSRYCYYRMLEQMTSARSG.

The residue at position 19 (cysteine 19) is a Cysteine sulfenic acid (-SOH). 2 residues coordinate 2-oxoglutarate: tyrosine 123 and threonine 172. Tyrosine 123 contributes to the succinate binding site. Residues 124–310 (IQKQNSNLSV…YCYYRMLEQM (187 aa)) enclose the JmjC domain. Fe cation contacts are provided by histidine 175 and aspartate 177. 2-oxoglutarate-binding residues include asparagine 181, tyrosine 183, and lysine 190. 2 residues coordinate succinate: tyrosine 183 and lysine 190. Histidine 278 lines the Fe cation pocket. A 2-oxoglutarate-binding site is contributed by tryptophan 292.

Homodimer; disulfide-linked. Fe(2+) serves as cofactor. In terms of tissue distribution, expressed in the pars intercerebralis and fan-shaped body, regions known to be involved in sleep.

It is found in the nucleus. The protein localises to the cytoplasm. The catalysed reaction is L-lysyl-[protein] + 2-oxoglutarate + O2 = (3S)-3-hydroxy-L-lysyl-[protein] + succinate + CO2. Its function is as follows. Bifunctional enzyme that acts both as an endopeptidase and 2-oxoglutarate-dependent monooxygenase. Endopeptidase that cleaves histones N-terminal tails at the carboxyl side of methylated arginine or lysine residues, to generate 'tailless nucleosomes', which may trigger transcription elongation. Hydroxylates the guanylate binding protein 128up. May be involved in regulation of behavior and circadian rhythms. The polypeptide is Bifunctional peptidase and (3S)-lysyl hydroxylase JMJD7 (Drosophila melanogaster (Fruit fly)).